Here is a 354-residue protein sequence, read N- to C-terminus: UDP-3-O-acylglucosamine N-acyltransferase (354 aa).

His247 (proton acceptor) is an active-site residue.

The protein belongs to the transferase hexapeptide repeat family. LpxD subfamily. Homotrimer.

It catalyses the reaction a UDP-3-O-[(3R)-3-hydroxyacyl]-alpha-D-glucosamine + a (3R)-hydroxyacyl-[ACP] = a UDP-2-N,3-O-bis[(3R)-3-hydroxyacyl]-alpha-D-glucosamine + holo-[ACP] + H(+). It participates in bacterial outer membrane biogenesis; LPS lipid A biosynthesis. Its function is as follows. Catalyzes the N-acylation of UDP-3-O-acylglucosamine using 3-hydroxyacyl-ACP as the acyl donor. Is involved in the biosynthesis of lipid A, a phosphorylated glycolipid that anchors the lipopolysaccharide to the outer membrane of the cell. This Chlamydia trachomatis serovar A (strain ATCC VR-571B / DSM 19440 / HAR-13) protein is UDP-3-O-acylglucosamine N-acyltransferase.